Consider the following 283-residue polypeptide: Bifunctional protein FolD (283 aa).

Residues 165–167, Ser190, and Val231 contribute to the NADP(+) site; that span reads GRS.

The protein belongs to the tetrahydrofolate dehydrogenase/cyclohydrolase family. In terms of assembly, homodimer.

The enzyme catalyses (6R)-5,10-methylene-5,6,7,8-tetrahydrofolate + NADP(+) = (6R)-5,10-methenyltetrahydrofolate + NADPH. It carries out the reaction (6R)-5,10-methenyltetrahydrofolate + H2O = (6R)-10-formyltetrahydrofolate + H(+). Its pathway is one-carbon metabolism; tetrahydrofolate interconversion. In terms of biological role, catalyzes the oxidation of 5,10-methylenetetrahydrofolate to 5,10-methenyltetrahydrofolate and then the hydrolysis of 5,10-methenyltetrahydrofolate to 10-formyltetrahydrofolate. The protein is Bifunctional protein FolD of Bacillus pumilus (strain SAFR-032).